The sequence spans 689 residues: DNA ligase (689 aa).

NAD(+) is bound by residues 35–39 (DEVYD), 84–85 (SL), and Glu122. Lys124 serves as the catalytic N6-AMP-lysine intermediate. NAD(+)-binding residues include Arg145, Glu182, Lys308, and Lys332. Zn(2+)-binding residues include Cys426, Cys429, Cys444, and Cys449. The region spanning 612-689 (TTEKSLNGKR…NETELIQMCR (78 aa)) is the BRCT domain.

Belongs to the NAD-dependent DNA ligase family. LigA subfamily. Mg(2+) serves as cofactor. The cofactor is Mn(2+).

It carries out the reaction NAD(+) + (deoxyribonucleotide)n-3'-hydroxyl + 5'-phospho-(deoxyribonucleotide)m = (deoxyribonucleotide)n+m + AMP + beta-nicotinamide D-nucleotide.. Functionally, DNA ligase that catalyzes the formation of phosphodiester linkages between 5'-phosphoryl and 3'-hydroxyl groups in double-stranded DNA using NAD as a coenzyme and as the energy source for the reaction. It is essential for DNA replication and repair of damaged DNA. The polypeptide is DNA ligase (Thermosynechococcus vestitus (strain NIES-2133 / IAM M-273 / BP-1)).